We begin with the raw amino-acid sequence, 376 residues long: MAGPRYPVSVQGAALVQIKRLQTFAFSVRWSDGSDTFVRRSWDEFRQLKKTLKETFPVEAGLLRRSDRVLPKLLGQASLDAPLLGRVGRTSRGLARLQLLETYSRRLLATAERVARSPTITGFFAPQPLDLEPALPPGSRVILPTPEEQPLSRAAGRLSIHSLEAQSLRCLQPFCTQDTRDRPFQAQAQESLDVLLRHPSGWWLVENEDRQTAWFPAPYLEEAAPGQGREGGPSLGSSGPQFCASRAYESSRADELSVPAGARVRVLETSDRGWWLCRYGDRAGLLPAVLLRPEGLGALLSGTGFRGGDDPAGEARGFPEPSQATAPPPTVPTRPSPGAIQSRCCTVTRRALERRPRRQGRPRGCVDSVPHPTTEQ.

In terms of domain architecture, PX spans 1–131 (MAGPRYPVSV…GFFAPQPLDL (131 aa)). SH3 domains follow at residues 163-225 (LEAQ…EAAP) and 237-296 (SSGP…PEGL). The segment at 302 to 376 (GTGFRGGDDP…DSVPHPTTEQ (75 aa)) is disordered. Over residues 326–335 (APPPTVPTRP) the composition is skewed to pro residues. The interval 328 to 337 (PPTVPTRPSP) is proline-rich region; mediates mutually exclusive interactions with itself and NOXA1.

As to quaternary structure, interacts with NOX1, NOXA1, CYBA/p22phox and NCF2/p67phox. Interacts with SH3PXD2A and SH3PXD2B. As to expression, expressed in testis, small and large intestines, liver, kidney and pancreas. Isoform 3 is mainly expressed in colon. Isoform 1 is preferentially expressed in testis.

Its subcellular location is the cell membrane. In terms of biological role, constitutively potentiates the superoxide-generating activity of NOX1 and NOX3 and is required for the biogenesis of otoconia/otolith, which are crystalline structures of the inner ear involved in the perception of gravity. Isoform 3 is more potent than isoform 1 in activating NOX3. Together with NOXA1, may also substitute to NCF1/p47phox and NCF2/p67phox in supporting the phagocyte NOX2/gp91phox superoxide-generating activity. The protein is NADPH oxidase organizer 1 (NOXO1) of Homo sapiens (Human).